Here is a 261-residue protein sequence, read N- to C-terminus: Small ribosomal subunit protein uS2 (261 aa).

The protein belongs to the universal ribosomal protein uS2 family.

This chain is Small ribosomal subunit protein uS2, found in Thermodesulfovibrio yellowstonii (strain ATCC 51303 / DSM 11347 / YP87).